The sequence spans 592 residues: Arginine--tRNA ligase (592 aa).

The 'HIGH' region motif lies at 131–141 (ANPTGPMHVGH).

Belongs to the class-I aminoacyl-tRNA synthetase family. As to quaternary structure, monomer.

The protein localises to the cytoplasm. The catalysed reaction is tRNA(Arg) + L-arginine + ATP = L-arginyl-tRNA(Arg) + AMP + diphosphate. The sequence is that of Arginine--tRNA ligase from Rhodospirillum rubrum (strain ATCC 11170 / ATH 1.1.1 / DSM 467 / LMG 4362 / NCIMB 8255 / S1).